A 243-amino-acid chain; its full sequence is Tail tip assembly protein K (243 aa).

Residues 1-120 (MRQKTIDAIM…ELPLLERPFV (120 aa)) form the MPN domain. 3 residues coordinate Zn(2+): His-69, His-71, and Asp-82. A JAMM motif motif is present at residues 69-82 (HSHPDATTQPSELD). A NlpC/P60 domain is found at 96–233 (VSWPEGDLRT…ERTMKIVRYK (138 aa)). Cys-126 serves as the catalytic Nucleophile. His-194 (proton acceptor) is an active-site residue. Residue His-206 is part of the active site.

This sequence belongs to the peptidase C40 family.

The protein resides in the host cytoplasm. Its function is as follows. Plays a role in tail tip complex assembly. The tail tip complex is assembled successively with three tail tip proteins J, one tail tip protein I, one tail tip protein L and one tail tip protein K. The tail tip complex interacts with tail measure protein to initiate tail tube assembly. The formation of the tail tip complex is completed by the addition of tail tip protein M, which is followed by tail tube polymerization. May be excluded form tail tip during maturation and would be absent from virions. May be involved in tail measure protein processing. The polypeptide is Tail tip assembly protein K (Escherichia coli (Bacteriophage N15)).